A 108-amino-acid chain; its full sequence is Ig kappa chain V-V region HP R16.7 (108 aa).

A framework-1 region spans residues 1–23; sequence DIQMTQTTSSLSASLGDRVTISC. The cysteines at positions 23 and 88 are disulfide-linked. The tract at residues 24-34 is complementarity-determining-1; that stretch reads RASQDISNYLN. The framework-2 stretch occupies residues 35–49; the sequence is WYQQKPDGTVKLLIY. A complementarity-determining-2 region spans residues 50–56; sequence YTSRLHS. Residues 57 to 88 are framework-3; sequence GVPSRFSGSGSGTDYSLTISNLEQEDIATYFC. Residues 89–97 form a complementarity-determining-3 region; sequence QQGNSLPRT. Residues 98 to 108 are framework-4; the sequence is FGGGTKLEIKR.

In Mus musculus (Mouse), this protein is Ig kappa chain V-V region HP R16.7.